An 897-amino-acid chain; its full sequence is Protein SAP1 (897 aa).

5 disordered regions span residues 112-144 (EEPA…PVFQ), 195-219 (PSKP…PPLK), 302-398 (QMSD…TKST), 413-438 (SKSN…PNSV), and 456-561 (KKVA…REEP). A compositionally biased stretch (polar residues) spans 120–137 (MPSSKTYTNHSSSFTRST). Residues 209-219 (NPIEHNDPPLK) show a composition bias toward basic and acidic residues. Over residues 307–321 (SVTSSTSSNKSVSSS) the composition is skewed to low complexity. A compositionally biased stretch (polar residues) spans 364 to 380 (LETSTTMDSSKIRNPQI). Basic residues predominate over residues 468–478 (KKSHPILKSKT). A compositionally biased stretch (low complexity) spans 480–496 (KVPNSSSKKTSSHPSRP). Residues 497–523 (VSNSKPYSHGASQNKKPSKNQTTSMSK) show a composition bias toward polar residues. Phosphoserine is present on S536. 645-652 (GPPGTGKT) provides a ligand contact to ATP.

The protein belongs to the AAA ATPase family. Interacts with SPT2/SIN1.

The polypeptide is Protein SAP1 (SAP1) (Saccharomyces cerevisiae (strain ATCC 204508 / S288c) (Baker's yeast)).